Reading from the N-terminus, the 334-residue chain is Protein-methionine-sulfoxide reductase catalytic subunit MsrP (334 aa).

A signal peptide (tat-type signal) is located at residues 1 to 44; it reads MKKNQFLKESDITAESVFFMKRRQVLKALGISAAALSLPHAAHA. Mo-molybdopterin contacts are provided by residues Asn88, 91-92, Cys146, Thr181, Asn233, Arg238, and 249-251; these read YE and GIK.

The protein belongs to the MsrP family. Heterodimer of a catalytic subunit (MsrP) and a heme-binding subunit (MsrQ). Mo-molybdopterin serves as cofactor. Predicted to be exported by the Tat system. The position of the signal peptide cleavage has not been experimentally proven.

Its subcellular location is the periplasm. It catalyses the reaction L-methionyl-[protein] + a quinone + H2O = L-methionyl-(S)-S-oxide-[protein] + a quinol. It carries out the reaction L-methionyl-[protein] + a quinone + H2O = L-methionyl-(R)-S-oxide-[protein] + a quinol. Functionally, part of the MsrPQ system that repairs oxidized periplasmic proteins containing methionine sulfoxide residues (Met-O), using respiratory chain electrons. Thus protects these proteins from oxidative-stress damage caused by reactive species of oxygen and chlorine generated by the host defense mechanisms. MsrPQ is essential for the maintenance of envelope integrity under bleach stress, rescuing a wide series of structurally unrelated periplasmic proteins from methionine oxidation, including the primary periplasmic chaperone SurA and the lipoprotein Pal. The catalytic subunit MsrP is non-stereospecific, being able to reduce both (R-) and (S-) diastereoisomers of methionine sulfoxide. This Shigella dysenteriae serotype 1 (strain Sd197) protein is Protein-methionine-sulfoxide reductase catalytic subunit MsrP.